A 556-amino-acid chain; its full sequence is uncharacterized protein (556 aa).

5 disordered regions span residues 1 to 40 (MSNS…TNEN), 80 to 243 (NTTQ…KQSW), 278 to 324 (YDSD…SSLP), 363 to 391 (RTKQ…KFVD), and 422 to 525 (DSKQ…ENSA). Positions 7–25 (NNNNNTNNNNNNNNNNNGN) are enriched in low complexity. The segment covering 30–40 (EEPDDDSTNEN) has biased composition (acidic residues). 2 stretches are compositionally biased toward low complexity: residues 80 to 133 (NTTQ…GTRS) and 164 to 181 (NDNN…NDSN). Over residues 182-192 (IVDDDEDEEEF) the composition is skewed to acidic residues. Residues 207–226 (STSSPSSTSSPIVSPQTQTS) show a composition bias toward low complexity. The segment covering 227–243 (KLESSMDVSPSSGKQSW) has biased composition (polar residues). Composition is skewed to low complexity over residues 292 to 322 (NNSS…NSSS), 369 to 388 (KVQQ…NNNK), and 425 to 525 (QQNV…ENSA). Residues 528–548 (GSFIKNAVIFIFILLLMVVGF) form a helical membrane-spanning segment.

The protein resides in the membrane. This is an uncharacterized protein from Dictyostelium discoideum (Social amoeba).